Consider the following 353-residue polypeptide: Protein-glutamate methylesterase/protein-glutamine glutaminase 4 (353 aa).

Residues 7 to 124 (RILVAEDSPT…SPDFDADSRR (118 aa)) enclose the Response regulatory domain. Asp58 carries the post-translational modification 4-aspartylphosphate. One can recognise a CheB-type methylesterase domain in the interval 158 to 350 (PVSPTRPGVV…SRLTSAFRGS (193 aa)). Residues Ser172, His199, and Asp292 contribute to the active site.

Belongs to the CheB family. In terms of processing, phosphorylated by CheA. Phosphorylation of the N-terminal regulatory domain activates the methylesterase activity.

Its subcellular location is the cytoplasm. It catalyses the reaction [protein]-L-glutamate 5-O-methyl ester + H2O = L-glutamyl-[protein] + methanol + H(+). It carries out the reaction L-glutaminyl-[protein] + H2O = L-glutamyl-[protein] + NH4(+). Involved in chemotaxis. Part of a chemotaxis signal transduction system that modulates chemotaxis in response to various stimuli. Catalyzes the demethylation of specific methylglutamate residues introduced into the chemoreceptors (methyl-accepting chemotaxis proteins or MCP) by CheR. Also mediates the irreversible deamidation of specific glutamine residues to glutamic acid. This chain is Protein-glutamate methylesterase/protein-glutamine glutaminase 4, found in Myxococcus xanthus (strain DK1622).